We begin with the raw amino-acid sequence, 23 residues long: Phallacidin proprotein 1 (23 aa).

P1 is a propeptide. A cross-link (cyclopeptide (Ala-Pro)) is located at residues 2-8 (AWLVDCP). A cross-link (2'-cysteinyl-6'-hydroxytryptophan sulfoxide (Trp-Cys)) is located at residues 3 to 7 (WLVDC). Positions 9–23 (CVGDDVNRLLTRGER) are excised as a propeptide.

The protein belongs to the MSDIN fungal toxin family. Processed by the macrocyclase-peptidase enzyme POPB to yield a toxic cyclic heptapeptide. POPB first removes 10 residues from the N-terminus. Conformational trapping of the remaining peptide forces the enzyme to release this intermediate rather than proceed to macrocyclization. The enzyme rebinds the remaining peptide in a different conformation and catalyzes macrocyclization of the N-terminal 7 residues.

In terms of biological role, toxin that belongs to the bicyclic heptapeptides called phallotoxins. Although structurally related to amatoxins, phallotoxins have a different mode of action, which is the stabilization of F-actin. Phallotoxins are poisonous when administered parenterally, but not orally because of poor absorption. The protein is Phallacidin proprotein 1 of Amanita exitialis (Guangzhou destroying angel).